The primary structure comprises 477 residues: Aspartyl/glutamyl-tRNA(Asn/Gln) amidotransferase subunit B (477 aa).

It belongs to the GatB/GatE family. GatB subfamily. Heterotrimer of A, B and C subunits.

The catalysed reaction is L-glutamyl-tRNA(Gln) + L-glutamine + ATP + H2O = L-glutaminyl-tRNA(Gln) + L-glutamate + ADP + phosphate + H(+). It catalyses the reaction L-aspartyl-tRNA(Asn) + L-glutamine + ATP + H2O = L-asparaginyl-tRNA(Asn) + L-glutamate + ADP + phosphate + 2 H(+). Functionally, allows the formation of correctly charged Asn-tRNA(Asn) or Gln-tRNA(Gln) through the transamidation of misacylated Asp-tRNA(Asn) or Glu-tRNA(Gln) in organisms which lack either or both of asparaginyl-tRNA or glutaminyl-tRNA synthetases. The reaction takes place in the presence of glutamine and ATP through an activated phospho-Asp-tRNA(Asn) or phospho-Glu-tRNA(Gln). This Oenococcus oeni (strain ATCC BAA-331 / PSU-1) protein is Aspartyl/glutamyl-tRNA(Asn/Gln) amidotransferase subunit B.